The sequence spans 138 residues: Large ribosomal subunit protein uL16 (138 aa).

Residues 1–19 (MLIPKRVKYRRQHRPHRSG) show a composition bias toward basic residues. The tract at residues 1-24 (MLIPKRVKYRRQHRPHRSGVSKGG) is disordered.

The protein belongs to the universal ribosomal protein uL16 family. In terms of assembly, part of the 50S ribosomal subunit.

Functionally, binds 23S rRNA and is also seen to make contacts with the A and possibly P site tRNAs. This Corynebacterium diphtheriae (strain ATCC 700971 / NCTC 13129 / Biotype gravis) protein is Large ribosomal subunit protein uL16.